A 197-amino-acid chain; its full sequence is Imidazoleglycerol-phosphate dehydratase (197 aa).

It belongs to the imidazoleglycerol-phosphate dehydratase family.

The protein localises to the cytoplasm. The enzyme catalyses D-erythro-1-(imidazol-4-yl)glycerol 3-phosphate = 3-(imidazol-4-yl)-2-oxopropyl phosphate + H2O. The protein operates within amino-acid biosynthesis; L-histidine biosynthesis; L-histidine from 5-phospho-alpha-D-ribose 1-diphosphate: step 6/9. This Cellvibrio japonicus (strain Ueda107) (Pseudomonas fluorescens subsp. cellulosa) protein is Imidazoleglycerol-phosphate dehydratase.